The chain runs to 274 residues: Penicillin-insensitive murein endopeptidase (274 aa).

A signal peptide spans 1-19 (MKKTAIALLAWFVSSASLA). Cystine bridges form between C44-C265, C187-C235, and C216-C223. H110, H113, D120, D147, H150, and H211 together coordinate Zn(2+). The disordered stretch occupies residues 225–274 (DQPLPPPGDGCGAELQSWFEPPKPGTTKPEKKTPPPLPPSCQALLDEHVL).

This sequence belongs to the peptidase M74 family. In terms of assembly, dimer. Requires Zn(2+) as cofactor.

The protein resides in the periplasm. Its function is as follows. Murein endopeptidase that cleaves the D-alanyl-meso-2,6-diamino-pimelyl amide bond that connects peptidoglycan strands. Likely plays a role in the removal of murein from the sacculus. This Salmonella arizonae (strain ATCC BAA-731 / CDC346-86 / RSK2980) protein is Penicillin-insensitive murein endopeptidase.